Reading from the N-terminus, the 509-residue chain is UDP-N-acetylmuramoyl-L-alanyl-D-glutamate--2,6-diaminopimelate ligase (509 aa).

UDP-N-acetyl-alpha-D-muramoyl-L-alanyl-D-glutamate is bound at residue Ser30. ATP is bound at residue 110-116 (GTNGKTT). Residues 152-153 (TT), Ser179, Gln185, and Arg187 each bind UDP-N-acetyl-alpha-D-muramoyl-L-alanyl-D-glutamate. N6-carboxylysine is present on Lys219. Residues Arg385, 409 to 412 (DNPR), Gly476, and Glu480 contribute to the meso-2,6-diaminopimelate site. A Meso-diaminopimelate recognition motif motif is present at residues 409–412 (DNPR).

Belongs to the MurCDEF family. MurE subfamily. Mg(2+) is required as a cofactor. Post-translationally, carboxylation is probably crucial for Mg(2+) binding and, consequently, for the gamma-phosphate positioning of ATP.

The protein resides in the cytoplasm. It carries out the reaction UDP-N-acetyl-alpha-D-muramoyl-L-alanyl-D-glutamate + meso-2,6-diaminopimelate + ATP = UDP-N-acetyl-alpha-D-muramoyl-L-alanyl-gamma-D-glutamyl-meso-2,6-diaminopimelate + ADP + phosphate + H(+). It participates in cell wall biogenesis; peptidoglycan biosynthesis. In terms of biological role, catalyzes the addition of meso-diaminopimelic acid to the nucleotide precursor UDP-N-acetylmuramoyl-L-alanyl-D-glutamate (UMAG) in the biosynthesis of bacterial cell-wall peptidoglycan. The chain is UDP-N-acetylmuramoyl-L-alanyl-D-glutamate--2,6-diaminopimelate ligase from Geobacter sulfurreducens (strain ATCC 51573 / DSM 12127 / PCA).